Consider the following 259-residue polypeptide: Isoprenyl transferase (259 aa).

Asp30 is a catalytic residue. Asp30 contacts Mg(2+). Residues 31-34 (GNGR), Trp35, Arg43, His47, and 75-77 (STE) each bind substrate. Asn78 acts as the Proton acceptor in catalysis. Residues Trp79, Arg81, Arg198, and 204–206 (RIS) each bind substrate. Mg(2+) is bound at residue Glu217.

It belongs to the UPP synthase family. As to quaternary structure, homodimer. It depends on Mg(2+) as a cofactor.

Its function is as follows. Catalyzes the condensation of isopentenyl diphosphate (IPP) with allylic pyrophosphates generating different type of terpenoids. This chain is Isoprenyl transferase, found in Caulobacter vibrioides (strain ATCC 19089 / CIP 103742 / CB 15) (Caulobacter crescentus).